We begin with the raw amino-acid sequence, 115 residues long: MKRKYILKKESEITAVFRSKKRCGNSSFIIYYSKQNVNTYFKFALSVGKKYGKAHERNLIKRRLRAIIRNYSSNLNPAFFFVIVIKPPAKNLTFQQLKTTFAKFASKINLLLSNN.

The protein belongs to the RnpA family. In terms of assembly, consists of a catalytic RNA component (M1 or rnpB) and a protein subunit.

It carries out the reaction Endonucleolytic cleavage of RNA, removing 5'-extranucleotides from tRNA precursor.. RNaseP catalyzes the removal of the 5'-leader sequence from pre-tRNA to produce the mature 5'-terminus. It can also cleave other RNA substrates such as 4.5S RNA. The protein component plays an auxiliary but essential role in vivo by binding to the 5'-leader sequence and broadening the substrate specificity of the ribozyme. The chain is Ribonuclease P protein component from Phytoplasma australiense.